Consider the following 185-residue polypeptide: SESTSFSFTNFNPNQENLILQEDALVNSKGTLELTKNGKPVPESLGRNCTTLASFTTSFSFVMSAPNSLDVADGLAFFLAPPDTQPQKRGGFLGLFKDRKHDISYQSVAVEFDTYSNVWDPNTTHIGIDTNTIESKKITPFDMVYGEKILFASLVFPVSQDILPEYVRVGFSATTGLNEGVVETH.

Asn-48 is a glycosylation site (N-linked (GlcNAc...) asparagine). Residues Glu-111 and Asp-113 each contribute to the Mn(2+) site. Asp-113, Tyr-115, Asn-117, and Asp-120 together coordinate Ca(2+). A Mn(2+)-binding site is contributed by Asp-120. The N-linked (GlcNAc...) asparagine glycan is linked to Asn-122. His-125 is a binding site for Mn(2+).

This sequence belongs to the leguminous lectin family. As to quaternary structure, homo- or heterotetramer. V.villosa isolectins are composed of either two subunits a and two subunits B (A2B2), four subunits A (A4), or four subunits B (B4). The predominant form, isolectin B4, has no A1 erythrocyte agglutinating activity.

In terms of biological role, N-acetyl-D-galactosamine specific lectin. Binds the Tn determinant (GalNAc-alpha-O-Ser/Thr) of the tumor-associated glycopeptide. Could be required for agglutinating cells such as Tn-exposed erythrocytes. The polypeptide is Lectin B4 (Vicia villosa (Hairy vetch)).